The chain runs to 161 residues: Regulator of ribonuclease activity A (161 aa).

This sequence belongs to the RraA family. Homotrimer. Binds to both RNA-binding sites in the C-terminal region of Rne and to RhlB.

Its subcellular location is the cytoplasm. Globally modulates RNA abundance by binding to RNase E (Rne) and regulating its endonucleolytic activity. Can modulate Rne action in a substrate-dependent manner by altering the composition of the degradosome. Modulates RNA-binding and helicase activities of the degradosome. The polypeptide is Regulator of ribonuclease activity A (Serratia proteamaculans (strain 568)).